A 444-amino-acid polypeptide reads, in one-letter code: Ribosomal protein uS12 methylthiotransferase RimO (444 aa).

An MTTase N-terminal domain is found at 2 to 118 (PSIGLLSLGC…IVEVVNHALE (117 aa)). The [4Fe-4S] cluster site is built by C11, C47, C81, C156, C160, and C163. Residues 142–372 (STPSYTAYVK…MKLQREISLS (231 aa)) enclose the Radical SAM core domain. A TRAM domain is found at 375 to 444 (QKRIGQEIEV…EYDLMGELAQ (70 aa)).

Belongs to the methylthiotransferase family. RimO subfamily. [4Fe-4S] cluster serves as cofactor.

Its subcellular location is the cytoplasm. The enzyme catalyses L-aspartate(89)-[ribosomal protein uS12]-hydrogen + (sulfur carrier)-SH + AH2 + 2 S-adenosyl-L-methionine = 3-methylsulfanyl-L-aspartate(89)-[ribosomal protein uS12]-hydrogen + (sulfur carrier)-H + 5'-deoxyadenosine + L-methionine + A + S-adenosyl-L-homocysteine + 2 H(+). In terms of biological role, catalyzes the methylthiolation of an aspartic acid residue of ribosomal protein uS12. The chain is Ribosomal protein uS12 methylthiotransferase RimO from Desulforamulus reducens (strain ATCC BAA-1160 / DSM 100696 / MI-1) (Desulfotomaculum reducens).